A 348-amino-acid chain; its full sequence is tRNA pseudouridine synthase D (348 aa).

Residue Phe-26 coordinates substrate. Asp-79 serves as the catalytic Nucleophile. Asn-128 contacts substrate. Positions 154-302 constitute a TRUD domain; that stretch reads GVPNYFGSQR…VDPARRALLL (149 aa). Phe-328 contacts substrate.

This sequence belongs to the pseudouridine synthase TruD family.

The catalysed reaction is uridine(13) in tRNA = pseudouridine(13) in tRNA. Its function is as follows. Responsible for synthesis of pseudouridine from uracil-13 in transfer RNAs. The polypeptide is tRNA pseudouridine synthase D (Serratia proteamaculans (strain 568)).